The sequence spans 395 residues: Multidrug resistance protein MdtL (395 aa).

12 helical membrane-spanning segments follow: residues 4 to 24 (FLLCSFALVLLYPAGIDMYLV), 42 to 62 (IAFSVYLAGMATAMLFAGKIA), 69 to 89 (PVAIVGALVFMMASLLCSRAS), 93 to 113 (LFLSGRFLQGVGAGGCYVVAF), 131 to 151 (LLNGITCIVPVLAPVVGHLIM), 158 to 178 (SLFYTMSAMGIIVGLLSLFIL), 217 to 237 (VSVILTFVNASPVLLMEVMGF), 247 to 267 (ALTAGVSMVVSFSTPFALGLF), 271 to 291 (TLMLVSQGLFLTAGVTLSLAH), 295 to 315 (VTLFGLTLICAGFSVGFGVAM), 333 to 353 (LGIAQVCGSSLWIWLAAILGI), and 358 to 378 (MLIGILIGCSIVSILLIFSVA).

Belongs to the major facilitator superfamily. DHA1 family. MdtL (TC 2.A.1.2.22) subfamily.

The protein resides in the cell inner membrane. This Salmonella agona (strain SL483) protein is Multidrug resistance protein MdtL.